The chain runs to 750 residues: Neprilysin (750 aa).

Residues 1-14 (MGKSESQMDITDIN) are compositionally biased toward polar residues. The tract at residues 1–20 (MGKSESQMDITDINTPKPKK) is disordered. Gly-2 carries the N-myristoyl glycine lipid modification. Residues 2 to 28 (GKSESQMDITDINTPKPKKKQRWTPLE) are Cytoplasmic-facing. Residues Ser-4 and Ser-6 each carry the phosphoserine modification. A Stop-transfer sequence motif is present at residues 16–23 (PKPKKKQR). The chain crosses the membrane as a helical; Signal-anchor for type II membrane protein span at residues 29-51 (ISLSVLVLLLTIIAVTMIALYAT). The Extracellular segment spans residues 52 to 750 (YDDGICKSSD…MNPEKKCRVW (699 aa)). A Peptidase M13 domain is found at 56 to 750 (ICKSSDCIKS…MNPEKKCRVW (695 aa)). 6 disulfides stabilise this stretch: Cys-57-Cys-62, Cys-80-Cys-735, Cys-88-Cys-695, Cys-143-Cys-411, Cys-234-Cys-242, and Cys-621-Cys-747. Arg-103 is a binding site for a peptide. An N-linked (GlcNAc...) asparagine glycan is attached at Asn-145. N-linked (GlcNAc...) asparagine glycosylation is found at Asn-285 and Asn-325. His-584 provides a ligand contact to Zn(2+). Glu-585 is a catalytic residue. His-588 is a binding site for Zn(2+). Asn-628 carries N-linked (GlcNAc...) asparagine glycosylation. Residue Glu-647 coordinates Zn(2+). The active-site Proton donor is the Asp-651.

It belongs to the peptidase M13 family. Zn(2+) is required as a cofactor. Post-translationally, myristoylation is a determinant of membrane targeting. In terms of processing, glycosylation at Asn-628 is necessary both for surface expression and neutral endopeptidase activity.

It is found in the cell membrane. The enzyme catalyses Preferential cleavage of polypeptides between hydrophobic residues, particularly with Phe or Tyr at P1'.. It carries out the reaction substance P + H2O = substance P(1-9) + L-Leu-L-Met-NH2. The catalysed reaction is substance P + H2O = substance P(1-7) + L-Phe-Gly-L-Leu-L-Met-NH2. It catalyses the reaction neurotensin + H2O = neurotensin(1-11) + L-isoleucyl-L-leucine. The enzyme catalyses neurotensin + H2O = neurotensin(1-10) + L-tyrosyl-L-isoleucyl-L-leucine. With respect to regulation, inhibited in a dose dependent manner by opiorphin. Activated by K49-P1-20, a twenty-residue synthetic peptide shortened from the snake B.asper myotoxin II. Its function is as follows. Thermolysin-like specificity, but is almost confined on acting on polypeptides of up to 30 amino acids. Biologically important in the destruction of opioid peptides such as Met- and Leu-enkephalins by cleavage of a Gly-Phe bond. Catalyzes cleavage of bradykinin, substance P and neurotensin peptides. Able to cleave angiotensin-1, angiotensin-2 and angiotensin 1-9. Involved in the degradation of atrial natriuretic factor (ANF) and brain natriuretic factor (BNP(1-32)). Displays UV-inducible elastase activity toward skin preelastic and elastic fibers. The chain is Neprilysin from Homo sapiens (Human).